The primary structure comprises 392 residues: Sterol methyltransferase-like 3 (392 aa).

Residues 20 to 42 (VTPWQAAAGVTAAIFIGSYLWHS) form a helical membrane-spanning segment.

This sequence belongs to the class I-like SAM-binding methyltransferase superfamily. Erg6/SMT family.

The protein localises to the microsome membrane. Functionally, unable to convert squalene, botryococcene, cycloartenol, zymosterol or lanosterol to mono-, di-, tri- or tetramethylated derivatives. This is Sterol methyltransferase-like 3 (SMT-3) from Botryococcus braunii (Green alga).